Here is a 341-residue protein sequence, read N- to C-terminus: S-adenosylmethionine:tRNA ribosyltransferase-isomerase (341 aa).

It belongs to the QueA family. As to quaternary structure, monomer.

The protein resides in the cytoplasm. The enzyme catalyses 7-aminomethyl-7-carbaguanosine(34) in tRNA + S-adenosyl-L-methionine = epoxyqueuosine(34) in tRNA + adenine + L-methionine + 2 H(+). It functions in the pathway tRNA modification; tRNA-queuosine biosynthesis. In terms of biological role, transfers and isomerizes the ribose moiety from AdoMet to the 7-aminomethyl group of 7-deazaguanine (preQ1-tRNA) to give epoxyqueuosine (oQ-tRNA). The polypeptide is S-adenosylmethionine:tRNA ribosyltransferase-isomerase (Thermoanaerobacter sp. (strain X514)).